The primary structure comprises 526 residues: Histidine ammonia-lyase (526 aa).

A cross-link (5-imidazolinone (Ala-Gly)) is located at residues Ala143–Gly145. A 2,3-didehydroalanine (Ser) modification is found at Ser144.

The protein belongs to the PAL/histidase family. Contains an active site 4-methylidene-imidazol-5-one (MIO), which is formed autocatalytically by cyclization and dehydration of residues Ala-Ser-Gly.

The protein resides in the cytoplasm. The catalysed reaction is L-histidine = trans-urocanate + NH4(+). It functions in the pathway amino-acid degradation; L-histidine degradation into L-glutamate; N-formimidoyl-L-glutamate from L-histidine: step 1/3. This chain is Histidine ammonia-lyase, found in Aromatoleum aromaticum (strain DSM 19018 / LMG 30748 / EbN1) (Azoarcus sp. (strain EbN1)).